A 212-amino-acid polypeptide reads, in one-letter code: uncharacterized protein (212 aa).

Residues glycine 53, glutamate 74, and aspartate 97 each coordinate S-adenosyl-L-methionine.

It belongs to the methyltransferase superfamily. YrrT family.

In terms of biological role, could be a S-adenosyl-L-methionine-dependent methyltransferase. This is an uncharacterized protein from Bacillus thuringiensis (strain Al Hakam).